We begin with the raw amino-acid sequence, 394 residues long: Tryptophan synthase beta chain (394 aa).

Lysine 84 carries the post-translational modification N6-(pyridoxal phosphate)lysine.

Belongs to the TrpB family. As to quaternary structure, tetramer of two alpha and two beta chains. Requires pyridoxal 5'-phosphate as cofactor.

The catalysed reaction is (1S,2R)-1-C-(indol-3-yl)glycerol 3-phosphate + L-serine = D-glyceraldehyde 3-phosphate + L-tryptophan + H2O. It functions in the pathway amino-acid biosynthesis; L-tryptophan biosynthesis; L-tryptophan from chorismate: step 5/5. In terms of biological role, the beta subunit is responsible for the synthesis of L-tryptophan from indole and L-serine. The sequence is that of Tryptophan synthase beta chain from Clostridium acetobutylicum (strain ATCC 824 / DSM 792 / JCM 1419 / IAM 19013 / LMG 5710 / NBRC 13948 / NRRL B-527 / VKM B-1787 / 2291 / W).